The sequence spans 890 residues: Alanine--tRNA ligase (890 aa).

The Zn(2+) site is built by His-573, His-577, Cys-675, and His-679.

It belongs to the class-II aminoacyl-tRNA synthetase family. It depends on Zn(2+) as a cofactor.

The protein resides in the cytoplasm. It catalyses the reaction tRNA(Ala) + L-alanine + ATP = L-alanyl-tRNA(Ala) + AMP + diphosphate. Its function is as follows. Catalyzes the attachment of alanine to tRNA(Ala) in a two-step reaction: alanine is first activated by ATP to form Ala-AMP and then transferred to the acceptor end of tRNA(Ala). Also edits incorrectly charged Ser-tRNA(Ala) and Gly-tRNA(Ala) via its editing domain. The chain is Alanine--tRNA ligase from Streptomyces avermitilis (strain ATCC 31267 / DSM 46492 / JCM 5070 / NBRC 14893 / NCIMB 12804 / NRRL 8165 / MA-4680).